A 255-amino-acid polypeptide reads, in one-letter code: Probable septum site-determining protein MinC (255 aa).

Residues 103 to 115 (SHGRRPRGERSEE) are compositionally biased toward basic and acidic residues. The disordered stretch occupies residues 103–136 (SHGRRPRGERSEEAAEAVPAAAEPVPAPAASPAP). A compositionally biased stretch (pro residues) spans 127-136 (VPAPAASPAP).

Belongs to the MinC family. In terms of assembly, interacts with MinD and FtsZ.

In terms of biological role, cell division inhibitor that blocks the formation of polar Z ring septums. Rapidly oscillates between the poles of the cell to destabilize FtsZ filaments that have formed before they mature into polar Z rings. Prevents FtsZ polymerization. This Ralstonia nicotianae (strain ATCC BAA-1114 / GMI1000) (Ralstonia solanacearum) protein is Probable septum site-determining protein MinC.